The sequence spans 695 residues: Protein ACTIVITY OF BC1 COMPLEX KINASE 7, chloroplastic (695 aa).

A Protein kinase domain is found at Glu259–Asp589. ATP-binding positions include Ile265–Val273 and Lys287. Asp421 (proton acceptor) is an active-site residue. 2 helical membrane-spanning segments follow: residues Thr633–Val653 and Gly659–Leu679.

Belongs to the protein kinase superfamily. ADCK protein kinase family. In terms of tissue distribution, mostly expressed in leaves and flowers, and, to a lower extent, in roots.

It localises to the plastid. The protein localises to the chloroplast thylakoid membrane. It is found in the chloroplast. Its subcellular location is the plastoglobule. It carries out the reaction L-seryl-[protein] + ATP = O-phospho-L-seryl-[protein] + ADP + H(+). The catalysed reaction is L-threonyl-[protein] + ATP = O-phospho-L-threonyl-[protein] + ADP + H(+). Involved in resistance to oxidative stress. Influences responses to reactive oxygen species (ROS) production. Regulates plastoglobules formation in thylakoids. Together with OSA1, regulates iron distribution within the chloroplast and mediates the oxidative stress response. Together with ABC1K8, influences chloroplast lipid synthesis/accumulation and modulates chloroplast membrane composition in response to stress. This Arabidopsis thaliana (Mouse-ear cress) protein is Protein ACTIVITY OF BC1 COMPLEX KINASE 7, chloroplastic.